The primary structure comprises 903 residues: Alanine--tRNA ligase (903 aa).

4 residues coordinate Zn(2+): His-591, His-595, Cys-695, and His-699.

The protein belongs to the class-II aminoacyl-tRNA synthetase family. It depends on Zn(2+) as a cofactor.

Its subcellular location is the cytoplasm. It catalyses the reaction tRNA(Ala) + L-alanine + ATP = L-alanyl-tRNA(Ala) + AMP + diphosphate. Its function is as follows. Catalyzes the attachment of alanine to tRNA(Ala) in a two-step reaction: alanine is first activated by ATP to form Ala-AMP and then transferred to the acceptor end of tRNA(Ala). Also edits incorrectly charged Ser-tRNA(Ala) and Gly-tRNA(Ala) via its editing domain. This Methanosphaera stadtmanae (strain ATCC 43021 / DSM 3091 / JCM 11832 / MCB-3) protein is Alanine--tRNA ligase.